A 177-amino-acid polypeptide reads, in one-letter code: Transcriptional repressor NrdR (177 aa).

Residues 3–34 fold into a zinc finger; the sequence is CPYCGGSETQVKDSRPSEDGAAIRRRRVCPDC. The ATP-cone domain maps to 49–139; that stretch reads VVVLKRSGKR…VYKNFREARD (91 aa). The disordered stretch occupies residues 148–177; it reads SDGMPVPAAAPEAEGDPEPEASGRRRAGRP.

It belongs to the NrdR family. It depends on Zn(2+) as a cofactor.

In terms of biological role, negatively regulates transcription of bacterial ribonucleotide reductase nrd genes and operons by binding to NrdR-boxes. In Methylobacterium radiotolerans (strain ATCC 27329 / DSM 1819 / JCM 2831 / NBRC 15690 / NCIMB 10815 / 0-1), this protein is Transcriptional repressor NrdR.